A 670-amino-acid polypeptide reads, in one-letter code: DNA ligase (670 aa).

NAD(+)-binding positions include 32-36, 81-82, and Glu-110; these read DAYYD and SL. Residue Lys-112 is the N6-AMP-lysine intermediate of the active site. 4 residues coordinate NAD(+): Arg-133, Glu-170, Lys-289, and Lys-313. The Zn(2+) site is built by Cys-407, Cys-410, Cys-425, and Cys-431. The BRCT domain maps to 590-670; that stretch reads EDELRLKGQT…ELLVFLGLAG (81 aa).

It belongs to the NAD-dependent DNA ligase family. LigA subfamily. Mg(2+) serves as cofactor. Requires Mn(2+) as cofactor.

The enzyme catalyses NAD(+) + (deoxyribonucleotide)n-3'-hydroxyl + 5'-phospho-(deoxyribonucleotide)m = (deoxyribonucleotide)n+m + AMP + beta-nicotinamide D-nucleotide.. In terms of biological role, DNA ligase that catalyzes the formation of phosphodiester linkages between 5'-phosphoryl and 3'-hydroxyl groups in double-stranded DNA using NAD as a coenzyme and as the energy source for the reaction. It is essential for DNA replication and repair of damaged DNA. This is DNA ligase from Shewanella denitrificans (strain OS217 / ATCC BAA-1090 / DSM 15013).